Consider the following 301-residue polypeptide: Olfactory receptor 10AG1 (301 aa).

The Extracellular segment spans residues 1–16; sequence MEFVLLGFSDIPNLHW. Residues 17–37 form a helical membrane-spanning segment; that stretch reads MLFSIFLLMYLMILMCNGIII. Residues 38 to 45 lie on the Cytoplasmic side of the membrane; it reads LLIKIHPA. A helical membrane pass occupies residues 46–66; it reads LQTPMYFFLSNFSLLEICYVT. Over 67 to 90 the chain is Extracellular; the sequence is IIIPRMLMDIWTQKGNISLFACAT. Residue Asn-82 is glycosylated (N-linked (GlcNAc...) asparagine). Residues Cys-88 and Cys-180 are joined by a disulfide bond. A helical membrane pass occupies residues 91–111; it reads QMCFFLMLGGTECLLLTVMAY. Residues 112-130 are Cytoplasmic-facing; the sequence is DRYVAICKPLQYPLVMNHK. A helical membrane pass occupies residues 131 to 151; that stretch reads VCIQLIIASWTITIPVVIGET. Residues 152-188 lie on the Extracellular side of the membrane; sequence CQIFLLPFCGTNTINHFFCDIPPILKLACGNIFVNEI. Residues 189–208 form a helical membrane-spanning segment; it reads TVHVVAVVFITVPFLLIVVS. At 209-228 the chain is on the cytoplasmic side; the sequence is YGKIISNILKLSSARGKAKA. Residues 229-249 traverse the membrane as a helical segment; sequence FSTCSSHLIVVILFFGAGTIT. The Extracellular portion of the chain corresponds to 250–262; it reads YLQPKPHQFQRMG. A helical transmembrane segment spans residues 263–283; the sequence is KLISLFYTILIPTLNPIIYTL. The Cytoplasmic segment spans residues 284 to 301; that stretch reads RNKDIMVALRKLLAKLLT.

The protein belongs to the G-protein coupled receptor 1 family.

The protein resides in the cell membrane. Functionally, odorant receptor. The polypeptide is Olfactory receptor 10AG1 (OR10AG1) (Homo sapiens (Human)).